A 123-amino-acid polypeptide reads, in one-letter code: Small ribosomal subunit protein uS12 (123 aa).

Position 89 is a 3-methylthioaspartic acid (Asp-89). A disordered region spans residues 101–123 (TLDTSGVSDRRQSRSKYGAKRPK). Positions 113-123 (SRSKYGAKRPK) are enriched in basic residues.

This sequence belongs to the universal ribosomal protein uS12 family. As to quaternary structure, part of the 30S ribosomal subunit. Contacts proteins S8 and S17. May interact with IF1 in the 30S initiation complex.

Its function is as follows. With S4 and S5 plays an important role in translational accuracy. In terms of biological role, interacts with and stabilizes bases of the 16S rRNA that are involved in tRNA selection in the A site and with the mRNA backbone. Located at the interface of the 30S and 50S subunits, it traverses the body of the 30S subunit contacting proteins on the other side and probably holding the rRNA structure together. The combined cluster of proteins S8, S12 and S17 appears to hold together the shoulder and platform of the 30S subunit. This is Small ribosomal subunit protein uS12 from Solidesulfovibrio magneticus (strain ATCC 700980 / DSM 13731 / RS-1) (Desulfovibrio magneticus).